Here is a 352-residue protein sequence, read N- to C-terminus: Peptide chain release factor 1 (352 aa).

N5-methylglutamine is present on Gln233. Positions Asn288–Asn309 are disordered. Residues Ala289–Arg306 are compositionally biased toward basic and acidic residues.

It belongs to the prokaryotic/mitochondrial release factor family. Post-translationally, methylated by PrmC. Methylation increases the termination efficiency of RF1.

Its subcellular location is the cytoplasm. In terms of biological role, peptide chain release factor 1 directs the termination of translation in response to the peptide chain termination codons UAG and UAA. The chain is Peptide chain release factor 1 from Helicobacter pylori (strain Shi470).